Here is a 146-residue protein sequence, read N- to C-terminus: Small ribosomal subunit protein uS5 (146 aa).

The S5 DRBM domain maps to 8-71 (FEESIVNIGR…DNAFKNLSKV (64 aa)).

It belongs to the universal ribosomal protein uS5 family. Part of the 30S ribosomal subunit. Contacts proteins S4 and S8.

With S4 and S12 plays an important role in translational accuracy. In terms of biological role, located at the back of the 30S subunit body where it stabilizes the conformation of the head with respect to the body. The sequence is that of Small ribosomal subunit protein uS5 from Sulfurimonas denitrificans (strain ATCC 33889 / DSM 1251) (Thiomicrospira denitrificans (strain ATCC 33889 / DSM 1251)).